Here is an 810-residue protein sequence, read N- to C-terminus: Ecotropic viral integration site 5 protein homolog (810 aa).

Positions 1-483 (MVTNKMTAAF…EAESQCALKE (483 aa)) are interaction with alpha-tubulin, gamma-tubulin, BIRC5 and FBXO5. 2 disordered regions span residues 49 to 80 (VASP…QLSP) and 98 to 123 (TDSK…SSSA). Low complexity predominate over residues 51 to 80 (SPSTSLHTTSSSTTLSTPALSPSSPSQLSP). Phosphoserine is present on residues serine 102 and serine 113. Low complexity predominate over residues 103 to 123 (LRSVNGSRRNSGSSLVSSSSA). Residues 128–693 (SHLEEDSWIL…LNKSDSNQYI (566 aa)) form a dimerization region. The Rab-GAP TBC domain maps to 163–348 (GIPHHFRAIV…RIFDIFMSEG (186 aa)). A targeting to the centrosomes region spans residues 377–810 (QHFQKVIPHQ…RRRESYSTTV (434 aa)). A coiled-coil region spans residues 406-716 (KKMKKLEKEY…LRCLKGQRGF (311 aa)). The interval 487-810 (KVLDIEKRNN…RRRESYSTTV (324 aa)) is interaction with AURKB and INCENP. Serine 497, serine 689, serine 776, and serine 778 each carry phosphoserine. Residues 756–810 (GFPLHGKSGSMSLDPAVADGSESETEDSVLETRESNQVVQKERPPRRRESYSTTV) are disordered. Residues 785-810 (LETRESNQVVQKERPPRRRESYSTTV) show a composition bias toward basic and acidic residues.

In terms of assembly, dimeric and monomeric. Interacts with alpha- and gamma-tubulin. Interacts with FBXO5. Interacts with the chromosome passenger complex (CPC) which is at least composed of AURKB/aurora-B, BIRC5/survivin, CDCA8/borealin and INCENP. In terms of processing, probably phosphorylated by PLK1; may be required for degradation during mitosis. Ubiquitinated. Degradation during prophase is ubiquitin-dependent. As to expression, expressed in various cell lines (at protein level). Expressed in a wide range of tissues including brain and adrenal.

The protein localises to the nucleus. It is found in the cytoplasm. Its subcellular location is the cytoskeleton. The protein resides in the microtubule organizing center. It localises to the centrosome. The protein localises to the spindle. Functions as a regulator of cell cycle progression by stabilizing the FBXO5 protein and promoting cyclin-A accumulation during interphase. May play a role in cytokinesis. This Homo sapiens (Human) protein is Ecotropic viral integration site 5 protein homolog (EVI5).